A 910-amino-acid polypeptide reads, in one-letter code: Anoctamin-6 (910 aa).

Residues 1-300 (MKKMSRNVLL…YGEKIGIYFA (300 aa)) are Cytoplasmic-facing. The helical transmembrane segment at 301–321 (WLGYYTQMLLLAAVVGVACFL) threads the bilayer. The Extracellular portion of the chain corresponds to 322-375 (YGYLNQDNCTWSKEVCHPDIGGKIIMCPQCDRLCPFWKLNITCESSKKLCIFDS). N329 carries N-linked (GlcNAc...) asparagine glycosylation. 5 disulfides stabilise this stretch: C330-C371, C337-C364, C348-C806, C351-C355, and C595-C600. N-linked (GlcNAc...) asparagine glycosylation occurs at N361. The helical transmembrane segment at 376-396 (FGTLVFAVFMGVWVTLFLEFW) threads the bilayer. Over 397–455 (KRRQAELEYEWDTVELQQEEQARPEYEARCTHVVINEITQEEERIPFTAWGKCIRITLC) the chain is Cytoplasmic. A helical transmembrane segment spans residues 456–476 (ASAVFFWILLIIASVIGIIVY). The Extracellular portion of the chain corresponds to 477-509 (RLSVFIVFSAKLPKNINGTDPIQKYLTPQTATS). N493 carries an N-linked (GlcNAc...) asparagine glycan. Residues 510–530 (ITASIISFIIIMILNTIYEKV) form a helical membrane-spanning segment. Residues 531–551 (AIMITNFELPRTQTDYENSLT) lie on the Cytoplasmic side of the membrane. Residues 552 to 572 (MKMFLFQFVNYYSSCFYIAFF) traverse the membrane as a helical segment. Over 573-601 (KGKFVGYPGDPVYWLGKYRNEECDPGGCL) the chain is Extracellular. The chain crosses the membrane as a helical span at residues 602–621 (LELTTQLTIIMGGKAIWNNI). Residues 622–663 (QEVLLPWIMNLIGRFHRVSGSEKITPRWEQDYHLQPMGKLGL) are Cytoplasmic-facing. Ca(2+) is bound by residues E623, E666, and E669. Transmembrane regions (helical) follow at residues 664 to 684 (FYEYLEMIIQFGFVTLFVASF) and 685 to 705 (PLAPLLALVNNILEIRVDAWK). At 706–722 (LTTQFRRLVPEKAQDIG) the chain is on the cytoplasmic side. The chain crosses the membrane as a helical span at residues 723–743 (AWQPIMQGIAILAVVTNAMII). The Extracellular segment spans residues 744-836 (AFTSDMIPRL…YWHVIAAKLA (93 aa)). N777, N790, and N802 each carry an N-linked (GlcNAc...) asparagine glycan. The chain crosses the membrane as a helical span at residues 837–857 (FIIVMEHVIYSVKFFISYAIP). Topologically, residues 858-910 (DVSKRTKSKIQREKYLTQKLLHENHLKDMTKNMGVIAERMIEAVDNNLRPKSE) are cytoplasmic.

This sequence belongs to the anoctamin family. As to quaternary structure, homodimer. As to expression, expressed in embryonic stem cell, fetal liver, retina, chronic myologenous leukemia and intestinal cancer.

It is found in the cell membrane. It catalyses the reaction a 1,2-diacyl-sn-glycero-3-phospho-L-serine(in) = a 1,2-diacyl-sn-glycero-3-phospho-L-serine(out). It carries out the reaction a beta-D-galactosyl-(1&lt;-&gt;1')-N-acylsphing-4-enine(out) = a beta-D-galactosyl-(1&lt;-&gt;1')-N-acylsphing-4-enine(in). The catalysed reaction is a 1,2-diacyl-sn-glycero-3-phosphocholine(in) = a 1,2-diacyl-sn-glycero-3-phosphocholine(out). Its activity is regulated as follows. Exhibits synergistic gating by Ca(2+) and voltage. Inhibited by some non-specific cation channel blockers such as: ruthenium red, 2-aminoethyl diphenylborinate (2APB), gadolinium and cadmium ions. With respect to regulation, (Microbial infection) Activated by SARS coronavirus-2/SARS-CoV-2 spike protein. Small-conductance calcium-activated nonselective cation (SCAN) channel which acts as a regulator of phospholipid scrambling in platelets and osteoblasts. Phospholipid scrambling results in surface exposure of phosphatidylserine which in platelets is essential to trigger the clotting system whereas in osteoblasts is essential for the deposition of hydroxyapatite during bone mineralization. Has calcium-dependent phospholipid scramblase activity; scrambles phosphatidylserine, phosphatidylcholine and galactosylceramide. Can generate outwardly rectifying chloride channel currents in airway epithelial cells and Jurkat T lymphocytes. Functionally, (Microbial infection) Upon SARS coronavirus-2/SARS-CoV-2 infection, is activated by spike protein which increases the amplitude of spontaneous Ca(2+) signals and is required for spike-mediated syncytia. In Homo sapiens (Human), this protein is Anoctamin-6.